An 892-amino-acid chain; its full sequence is DNA mismatch repair protein MutS (892 aa).

607–614 provides a ligand contact to ATP; that stretch reads GPNMSGKS.

This sequence belongs to the DNA mismatch repair MutS family.

Its function is as follows. This protein is involved in the repair of mismatches in DNA. It is possible that it carries out the mismatch recognition step. This protein has a weak ATPase activity. This Bacillus cereus (strain AH820) protein is DNA mismatch repair protein MutS.